A 949-amino-acid polypeptide reads, in one-letter code: MKETSFWGETPSLSFADDTDKPLSDRTASPPCDPASSLQTALDTAAAQGQTTRENVLSILRRHLGSGNATVRREFEKRRMSGIDAARALARQADDMVCALAELAAQKHESPGETLCLCATGGYGAGLLAPFSDIDILFLIPGDPTPAMTARIEFILYALWDLGLRVGHATRSIAECVRDADSDLTIRTALLDLRFLHGERGLARDLRCALGADLQNDRLCEFVMGKIAEREQRHRRFGDNPYMVEPNIKEGRGGLRDLQTLNWMGRAALGCAVSTPDRSGQPAEAPQTPSFASFGLLTDRESLRARRSWDFLWTVRLHLHYITGRAEERLTFDVQPVIGGRMGYATHGRQRGVERFMRHYFLTARDVMRLTSVLQPVVLMHLQDQTTGEPPKVVPGPEEFQTIAGRICPIEPVTFAAQPREMFRLLDCGRRHDLPLHPIAMQQIIRNERHAVTLRDDPETAKIFLDLLCEPSADETKAVPFWLPILNETGLLGRLLPDWSRVVGQMQFDSYHIYTVDEHIVEAVRMMGQIEAGRMADEIPLAYTLASDLRSRRALYVAVLLHDIGKGRGGDHSEIGADLALTICPQLGLDPEETDTVSWLVLHHLLLSQTAFTRDIDDPRTILDLADTIQSPERLRLLLLLTIADMRAVSPKVWNAWKATLLRELFSRVAEVLEGGLAATERDSRVNHARELARDGLTGILPESSIDRFLDLGYPSYWLGFDTDTQMRHARMVHDSDRYRSPVTVEAYPIPERGVTELTVLCADHPGLFSQIAGALAVSGASIVDARIHTLSDGMALDTFWVQDGEGCSFEEPHQLGRLNHLVEQALSGRLDIRKGIEDASHHSTSRRMRAIHVPPRVVIDNTASDRHTVIEVNGRDRPGLLHDVTSALSSASLQISSAHITTYGMRAVDVFYVRDLLGMKITDPVRLARLRETLLASLTSAPVTTPAS.

Positions 1-37 (MKETSFWGETPSLSFADDTDKPLSDRTASPPCDPASS) are disordered. The tract at residues 1 to 395 (MKETSFWGET…TTGEPPKVVP (395 aa)) is uridylyltransferase. Positions 396–756 (GPEEFQTIAG…AYPIPERGVT (361 aa)) are uridylyl-removing. Residues 516-632 (VDEHIVEAVR…LDLADTIQSP (117 aa)) enclose the HD domain. ACT domains are found at residues 757–834 (ELTV…LDIR) and 870–949 (VIEV…TPAS).

This sequence belongs to the GlnD family. The cofactor is Mg(2+).

The catalysed reaction is [protein-PII]-L-tyrosine + UTP = [protein-PII]-uridylyl-L-tyrosine + diphosphate. The enzyme catalyses [protein-PII]-uridylyl-L-tyrosine + H2O = [protein-PII]-L-tyrosine + UMP + H(+). Its activity is regulated as follows. Uridylyltransferase (UTase) activity is inhibited by glutamine, while glutamine activates uridylyl-removing (UR) activity. Its function is as follows. Modifies, by uridylylation and deuridylylation, the PII regulatory proteins (GlnB and homologs), in response to the nitrogen status of the cell that GlnD senses through the glutamine level. Under low glutamine levels, catalyzes the conversion of the PII proteins and UTP to PII-UMP and PPi, while under higher glutamine levels, GlnD hydrolyzes PII-UMP to PII and UMP (deuridylylation). Thus, controls uridylylation state and activity of the PII proteins, and plays an important role in the regulation of nitrogen assimilation and metabolism. This Gluconobacter oxydans (strain 621H) (Gluconobacter suboxydans) protein is Bifunctional uridylyltransferase/uridylyl-removing enzyme.